The chain runs to 598 residues: Rho-related protein racA (598 aa).

11–17 (DGAVGKS) contributes to the GTP binding site. An Effector region motif is present at residues 32–40 (YVPTVFDNY). GTP contacts are provided by residues 57 to 61 (DTAGQ) and 115 to 118 (TKND). The interval 175–210 (ASAKKKGGFFSSSSSSSSSSSSKSSEKSVPIPPVMP) is disordered. Low complexity predominate over residues 182–197 (GFFSSSSSSSSSSSSK). BTB domains are found at residues 239 to 344 (SDVK…NYLD) and 405 to 472 (SDIQ…PIEE).

This sequence in the N-terminal section; belongs to the small GTPase superfamily. Rho family. As to quaternary structure, interacts with pakB.

The protein is Rho-related protein racA (racA) of Dictyostelium discoideum (Social amoeba).